We begin with the raw amino-acid sequence, 97 residues long: Coiled-coil domain-containing protein 167 (97 aa).

Residues 10-79 (GVALEIDGLE…LRQENRKNML (70 aa)) are a coiled coil. A helical membrane pass occupies residues 78–95 (MLLSVAIFILLTLVYAYW).

It is found in the membrane. In Homo sapiens (Human), this protein is Coiled-coil domain-containing protein 167 (CCDC167).